We begin with the raw amino-acid sequence, 340 residues long: Diacylglycerol acyltransferase/mycolyltransferase Ag85C (340 aa).

The first 45 residues, 1 to 45 (MTFFEQVRRLRSAATTLPRRLAIAAMGAVLVYGLVGTFGGPATAG), serve as a signal peptide directing secretion. A substrate-binding site is contributed by 86-87 (LR). The fibronectin-binding stretch occupies residues 102-112 (FEEYYQSGLSV). Serine 170 and asparagine 198 together coordinate substrate. Serine 170 functions as the Nucleophile in the catalytic mechanism. Glutamate 274 is an active-site residue. Residues 276 to 279 (LTLR) and 306 to 308 (HSW) contribute to the substrate site. Residue histidine 306 is part of the active site.

The protein belongs to the mycobacterial A85 antigen family. Homodimer.

It localises to the secreted. The enzyme catalyses an acyl-CoA + a 1,2-diacyl-sn-glycerol = a triacyl-sn-glycerol + CoA. The catalysed reaction is 2 alpha,alpha'-trehalose 6-mycolate = alpha,alpha'-trehalose 6,6'-bismycolate + alpha,alpha-trehalose. In terms of biological role, the antigen 85 proteins (FbpA, FbpB, FbpC) are responsible for the high affinity of mycobacteria to fibronectin, a large adhesive glycoprotein, which facilitates the attachment of M.tuberculosis to murine alveolar macrophages (AMs). They also help to maintain the integrity of the cell wall by catalyzing the transfer of mycolic acids to cell wall arabinogalactan and through the synthesis of alpha,alpha-trehalose dimycolate (TDM, cord factor). They catalyze the transfer of a mycoloyl residue from one molecule of alpha,alpha-trehalose monomycolate (TMM) to another TMM, leading to the formation of TDM. This chain is Diacylglycerol acyltransferase/mycolyltransferase Ag85C (fbpC), found in Mycobacterium bovis (strain ATCC BAA-935 / AF2122/97).